Consider the following 82-residue polypeptide: Large ribosomal subunit protein uL23 (82 aa).

It belongs to the universal ribosomal protein uL23 family. As to quaternary structure, part of the 50S ribosomal subunit. Contacts protein L29.

Its function is as follows. Binds to 23S rRNA. One of the proteins that surrounds the polypeptide exit tunnel on the outside of the ribosome. In Sulfurisphaera tokodaii (strain DSM 16993 / JCM 10545 / NBRC 100140 / 7) (Sulfolobus tokodaii), this protein is Large ribosomal subunit protein uL23.